The sequence spans 318 residues: O-glucosyltransferase LpsA (318 aa).

Belongs to the glycosyltransferase 90 family.

Its pathway is protein modification; protein glycosylation. Functionally, involved in lipopolysaccharide core biosynthesis. The protein is O-glucosyltransferase LpsA (lpsA) of Dichelobacter nodosus (Bacteroides nodosus).